Consider the following 624-residue polypeptide: Interleukin-1 receptor-associated kinase-like 2 (624 aa).

The Death domain occupies 13 to 94 (LDDLCRNIDT…RAAQIVLSWK (82 aa)). In terms of domain architecture, Protein kinase spans 210 to 475 (FDQSHRISEG…LPEACAETWA (266 aa)). ATP is bound by residues 216-224 (ISEGTFADI), Lys237, and 337-340 (KSAN). Disordered regions lie at residues 508-536 (SLPW…NSSL) and 549-593 (RVSS…ETSW). Residues 558–577 (GNGTAQPSTSGRQEADSSSE) are compositionally biased toward polar residues.

Belongs to the protein kinase superfamily. TKL Ser/Thr protein kinase family. Pelle subfamily. As to quaternary structure, interacts with MYD88. IL-1 stimulation leads to the formation of a signaling complex which dissociates from the IL-1 receptor following the binding of PELI1.

Its function is as follows. Binds to the IL-1 type I receptor following IL-1 engagement, triggering intracellular signaling cascades leading to transcriptional up-regulation and mRNA stabilization. The polypeptide is Interleukin-1 receptor-associated kinase-like 2 (Irak2) (Rattus norvegicus (Rat)).